Consider the following 843-residue polypeptide: N-acetyltransferase ESCO1 (843 aa).

Residues 1–78 are disordered; that stretch reads MSIQEKSKEN…SASCSADKTA (78 aa). Residues 18–28 show a composition bias toward acidic residues; the sequence is SEDENLEEEVE. A compositionally biased stretch (polar residues) spans 66–78; it reads STRSASCSADKTA. A Phosphoserine modification is found at Ser-202. The interval 262–300 is disordered; that stretch reads NELRKSAHTQVSTSTKRPQIPLPLVPEHSDDQELEQAGK. The span at 269-278 shows a compositional bias: polar residues; sequence HTQVSTSTKR. Lys-335 is covalently cross-linked (Glycyl lysine isopeptide (Lys-Gly) (interchain with G-Cter in SUMO2)). Position 415 is a phosphoserine (Ser-415). The disordered stretch occupies residues 546-584; sequence DRTFPGSAPNQQHSVLSDEASINRKNRDVPPNHSQLKHD. A compositionally biased stretch (basic and acidic residues) spans 566–584; the sequence is SINRKNRDVPPNHSQLKHD. The CCHH-type zinc-finger motif lies at 620–644; that stretch reads VSCNICGMLYTASNPEDETQHLLFH. Residues 775–777, 783–788, and 815–817 each bind acetyl-CoA; these read IWV, RKKIAS, and TPD.

The protein belongs to the acetyltransferase family. ECO subfamily. The subunit structure is controversial. Monomer. Homodimer. In terms of processing, phosphorylated during mitosis.

It localises to the nucleus. It is found in the chromosome. It carries out the reaction L-lysyl-[protein] + acetyl-CoA = N(6)-acetyl-L-lysyl-[protein] + CoA + H(+). Functionally, acetyltransferase required for the establishment of sister chromatid cohesion. Couples the processes of cohesion and DNA replication to ensure that only sister chromatids become paired together. In contrast to the structural cohesins, the deposition and establishment factors are required only during S phase. Acts by mediating the acetylation of cohesin component SMC3. This Mus musculus (Mouse) protein is N-acetyltransferase ESCO1 (Esco1).